The primary structure comprises 67 residues: Conotoxin reg3.8 (67 aa).

A signal peptide spans M1–P22. Positions L23–R50 are excised as a propeptide. 3 disulfides stabilise this stretch: C51-C65, C52-C63, and C57-C66. The residue at position 66 (C66) is a Cysteine amide.

It belongs to the conotoxin M superfamily. As to expression, expressed by the venom duct.

It is found in the secreted. The polypeptide is Conotoxin reg3.8 (Conus regius (Crown cone)).